The chain runs to 474 residues: Glycogen synthase (474 aa).

Lys-12 contacts ADP-alpha-D-glucose.

Belongs to the glycosyltransferase 1 family. Bacterial/plant glycogen synthase subfamily.

It carries out the reaction [(1-&gt;4)-alpha-D-glucosyl](n) + ADP-alpha-D-glucose = [(1-&gt;4)-alpha-D-glucosyl](n+1) + ADP + H(+). It participates in glycan biosynthesis; glycogen biosynthesis. Its function is as follows. Synthesizes alpha-1,4-glucan chains using ADP-glucose. The polypeptide is Glycogen synthase (Xanthomonas campestris pv. campestris (strain 8004)).